Consider the following 262-residue polypeptide: Flap endonuclease Xni (262 aa).

Asp105 lines the Mg(2+) pocket. Positions 164–251 (SQFLDLMALA…NINLKDFRAN (88 aa)) constitute a 5'-3' exonuclease domain. Residues Leu172, Ala173, Pro181, Ile183, and Ile186 each coordinate K(+). An interaction with DNA region spans residues 185–190 (GIGPKS).

This sequence belongs to the Xni family. Requires Mg(2+) as cofactor. K(+) serves as cofactor.

In terms of biological role, has flap endonuclease activity. During DNA replication, flap endonucleases cleave the 5'-overhanging flap structure that is generated by displacement synthesis when DNA polymerase encounters the 5'-end of a downstream Okazaki fragment. The protein is Flap endonuclease Xni of Shewanella putrefaciens (strain CN-32 / ATCC BAA-453).